The following is a 200-amino-acid chain: Small ribosomal subunit protein uS4 (200 aa).

Positions Ser92 to Val155 constitute an S4 RNA-binding domain.

This sequence belongs to the universal ribosomal protein uS4 family. As to quaternary structure, part of the 30S ribosomal subunit. Contacts protein S5. The interaction surface between S4 and S5 is involved in control of translational fidelity.

Functionally, one of the primary rRNA binding proteins, it binds directly to 16S rRNA where it nucleates assembly of the body of the 30S subunit. In terms of biological role, with S5 and S12 plays an important role in translational accuracy. This is Small ribosomal subunit protein uS4 from Staphylococcus epidermidis (strain ATCC 35984 / DSM 28319 / BCRC 17069 / CCUG 31568 / BM 3577 / RP62A).